The primary structure comprises 308 residues: UDP-N-acetylenolpyruvoylglucosamine reductase (308 aa).

The 165-residue stretch at 32 to 196 folds into the FAD-binding PCMH-type domain; that stretch reads VGGPAARLYK…ISAKLQLSPG (165 aa). The active site involves arginine 176. The Proton donor role is filled by serine 225. The active site involves glutamate 296.

The protein belongs to the MurB family. FAD is required as a cofactor.

Its subcellular location is the cytoplasm. The catalysed reaction is UDP-N-acetyl-alpha-D-muramate + NADP(+) = UDP-N-acetyl-3-O-(1-carboxyvinyl)-alpha-D-glucosamine + NADPH + H(+). It functions in the pathway cell wall biogenesis; peptidoglycan biosynthesis. Its function is as follows. Cell wall formation. The protein is UDP-N-acetylenolpyruvoylglucosamine reductase of Legionella pneumophila subsp. pneumophila (strain Philadelphia 1 / ATCC 33152 / DSM 7513).